A 343-amino-acid polypeptide reads, in one-letter code: L-threonine 3-dehydrogenase (343 aa).

A Zn(2+)-binding site is contributed by Cys40. Active-site charge relay system residues include Thr42 and His45. Positions 65, 66, 95, 98, 101, and 109 each coordinate Zn(2+). NAD(+) is bound by residues Ile177, Asp197, Arg202, 264-266, and 288-289; these read LGI and IY.

The protein belongs to the zinc-containing alcohol dehydrogenase family. As to quaternary structure, homotetramer. The cofactor is Zn(2+).

Its subcellular location is the cytoplasm. The enzyme catalyses L-threonine + NAD(+) = (2S)-2-amino-3-oxobutanoate + NADH + H(+). It functions in the pathway amino-acid degradation; L-threonine degradation via oxydo-reductase pathway; glycine from L-threonine: step 1/2. Catalyzes the NAD(+)-dependent oxidation of L-threonine to 2-amino-3-ketobutyrate. The protein is L-threonine 3-dehydrogenase of Aliivibrio fischeri (strain MJ11) (Vibrio fischeri).